The primary structure comprises 607 residues: MPRKKPFSVKQKKKQLQDKRERKRGLQDGLRSSSNSRSGSRERREEQTDTSDGESVTHHIRRLNQQPSQGLGPRGYDPNRYRLHFERDSREEVERRKRAAREQVLQPVSAEMLELDIQEVYQPGSVLDFPRRPPWSYEMSKEQLMSQEERSFQEYLGKIHGAYTSEKLSYFEHNLETWRQLWRVLEMSDIVLLITDIRHPVVNFPPALYEYVTGELGLALVLVLNKVDLAPPALVVAWKHYFHQHYPQLHIVLFTSFPRDTRTPQEPGSVLKKSRRRGRGWTRALGPEQLLRACEAITVGKVDLSSWREKIARDVAGASWGNVSGEEEEEEDGPAVLVEQQTDSAMEPTGPSRERYKDGVVTIGCVGFPNVGKSSLINGLVGRKVVSVSRTPGHTRYFQTYFLTPSVKLCDCPGLIFPSLLPRQLQVLAGIYPIAQIQEPYTSVGYLACRIPVQALLHLRHPEAEDPSAEHPWCAWDVCEAWAEKRGYKTAKAARNDVYRAANSLLRLAVDGRLSLCFHPPGYSEQRGTWESHAETAELVLSQGRVGPAGDEEEEEEEELSSSCEEEGEEDRDADEEGEGDEDTPTSDTGSCLAARNPYALLGEGEC.

Residues 1–14 (MPRKKPFSVKQKKK) show a composition bias toward basic residues. A disordered region spans residues 1–81 (MPRKKPFSVK…GPRGYDPNRY (81 aa)). Basic and acidic residues predominate over residues 15–26 (QLQDKRERKRGL). Phosphoserine occurs at positions 32, 33, and 34. 2 positions are modified to phosphothreonine: Thr48 and Thr50. Residues Ser51 and Ser68 each carry the phosphoserine modification. Positions 178–418 (WRQLWRVLEM…LCDCPGLIFP (241 aa)) constitute a CP-type G domain. Position 225–228 (225–228 (NKVD)) interacts with GTP. At Ser324 the chain carries Phosphoserine. GTP-binding positions include 367–374 (GFPNVGKS) and 411–415 (DCPGL). A disordered region spans residues 544–607 (GRVGPAGDEE…PYALLGEGEC (64 aa)). The span at 550–585 (GDEEEEEEEELSSSCEEEGEEDRDADEEGEGDEDTP) shows a compositional bias: acidic residues. Phosphoserine occurs at positions 561, 562, and 563.

Belongs to the TRAFAC class YlqF/YawG GTPase family.

Functionally, possible regulatory or functional link with the histocompatibility cluster. The sequence is that of Guanine nucleotide-binding protein-like 1 (Gnl1) from Rattus norvegicus (Rat).